Consider the following 208-residue polypeptide: Methyl-CpG-binding domain protein 3-like 3 (208 aa).

Belongs to the MBD3L family.

In Homo sapiens (Human), this protein is Methyl-CpG-binding domain protein 3-like 3 (MBD3L3).